A 743-amino-acid chain; its full sequence is FHF complex subunit HOOK-interacting protein 2B (743 aa).

The interval 186-219 is disordered; the sequence is CGEPTALPKDTTSHGDKDCSHDGAPARPQLDGES. Positions 196–206 are enriched in basic and acidic residues; it reads TTSHGDKDCSH.

The protein belongs to the FHIP family. As to expression, expressed in liver.

Functionally, able to activate MAPK/ERK and TGFB signaling pathways. May regulate the activity of genes involved in intestinal barrier function and immunoprotective inflammation. May play a role in cell proliferation. This is FHF complex subunit HOOK-interacting protein 2B from Homo sapiens (Human).